A 151-amino-acid chain; its full sequence is Deoxyuridine 5'-triphosphate nucleotidohydrolase (151 aa).

Residues 70–72, Asn83, 87–89, and Met97 contribute to the substrate site; these read RSG and LID.

The protein belongs to the dUTPase family. In terms of assembly, homotrimer. It depends on Mg(2+) as a cofactor.

The catalysed reaction is dUTP + H2O = dUMP + diphosphate + H(+). It functions in the pathway pyrimidine metabolism; dUMP biosynthesis; dUMP from dCTP (dUTP route): step 2/2. Its function is as follows. This enzyme is involved in nucleotide metabolism: it produces dUMP, the immediate precursor of thymidine nucleotides and it decreases the intracellular concentration of dUTP so that uracil cannot be incorporated into DNA. This chain is Deoxyuridine 5'-triphosphate nucleotidohydrolase, found in Escherichia coli (strain K12 / MC4100 / BW2952).